The following is a 710-amino-acid chain: MHDPVKKSAHLTAGSTSTAEKLCFDKNEFMKANFSVDEFLHKNRNAPSLEQLRDNLGLYLKGLRAAMIDLINEDYADFVNLSANLVGLDQNIKTIQQPLEQFRSDIESIHGLIDENVTELRAQLEEKRQLREFKRGLQSLKKVYETINKLQDLIDRKLSGEQPIKAVDLERAALDLIQLKFHEKHCFKHLSPDHQGKIQQLEEQLHQHLRRFFNDALSQARNSAPESLERCLRIYITLNACDQAECAFREDVVAPYMTGVIGEQQLQNSPQGLAGIYSKILNFISLHMTDLLRLTLYSDKFPGFNFVVNSYWSDVETRLELHMNSIFAPGNSEVFYVKYKCTRDFLGKIEELLTCSGEQAVTFYRQHKQTKSFEARWNLPVYFQICFQEIAGKFEAQLEPVLQEDSLKDNLTDSDYKISAFNAAKEAMTRCWAEGVYLPEVFPKFYKLNVQVVLRLSRWITDAITQSKGSNFSKPYTRNQLLIALHADIRKLDAHLPELQQLIIKSVPVEQCTKIFSDVLAKSMSCLADTLGAHLTNIQKTLVELLIGECETENVRQVNDLPRLYRKTNREVPTRCSSYVEQMLRPLKAFAQQNESQLGTLVVEQILAEVASHITKAYFNVVSDVLTSVQKTEESLRRLRNVKSGGAATVSTGSSAVMSDDDKIRVQLRVDVTSWRQELCKLNFQATQIDKLVELTNMVEDSIKLKDNSA.

This sequence belongs to the COG2 family. In terms of assembly, component of the conserved oligomeric Golgi complex which is composed of eight different subunits and is required for normal Golgi morphology and localization.

The protein resides in the golgi apparatus membrane. Its function is as follows. Required for normal Golgi morphology and function. The sequence is that of Conserved oligomeric Golgi complex subunit 2 from Drosophila melanogaster (Fruit fly).